The following is a 434-amino-acid chain: Glycoprotein U20 (434 aa).

A signal peptide spans 1–15 (MITVFVACLFQCVSS). A helical membrane pass occupies residues 322–342 (LLWIFIVIPIAAGCMFLYILT).

The protein resides in the host endoplasmic reticulum membrane. It localises to the host lysosome membrane. In terms of biological role, plays a role in the down-regulation of the host stress-induced NKG2D ligand UBPL1, which enables immune cells expressing the NKG2D receptor to recognize and annihilate infected cells prior to viral spread. This chain is Glycoprotein U20 (U20), found in Human herpesvirus 6B (strain Z29) (HHV-6 variant B).